We begin with the raw amino-acid sequence, 84 residues long: Large ribosomal subunit protein bL27 (84 aa).

The tract at residues 1-22 (MAKTKAGGSTKNGRDSAGRRLG) is disordered.

It belongs to the bacterial ribosomal protein bL27 family.

This Mesomycoplasma hyopneumoniae (strain 232) (Mycoplasma hyopneumoniae) protein is Large ribosomal subunit protein bL27.